Consider the following 475-residue polypeptide: Bifunctional protein HldE (475 aa).

The ribokinase stretch occupies residues 1-317 (MQYSAQFNRA…ENAIHGRTTA (317 aa)). 194–197 (NMSE) provides a ligand contact to ATP. Asp-263 is an active-site residue. The cytidylyltransferase stretch occupies residues 343–475 (MTNGCFDILH…VIKKIQQLKE (133 aa)).

The protein in the N-terminal section; belongs to the carbohydrate kinase PfkB family. In the C-terminal section; belongs to the cytidylyltransferase family. Homodimer.

It catalyses the reaction D-glycero-beta-D-manno-heptose 7-phosphate + ATP = D-glycero-beta-D-manno-heptose 1,7-bisphosphate + ADP + H(+). The enzyme catalyses D-glycero-beta-D-manno-heptose 1-phosphate + ATP + H(+) = ADP-D-glycero-beta-D-manno-heptose + diphosphate. The protein operates within nucleotide-sugar biosynthesis; ADP-L-glycero-beta-D-manno-heptose biosynthesis; ADP-L-glycero-beta-D-manno-heptose from D-glycero-beta-D-manno-heptose 7-phosphate: step 1/4. It participates in nucleotide-sugar biosynthesis; ADP-L-glycero-beta-D-manno-heptose biosynthesis; ADP-L-glycero-beta-D-manno-heptose from D-glycero-beta-D-manno-heptose 7-phosphate: step 3/4. Its function is as follows. Catalyzes the phosphorylation of D-glycero-D-manno-heptose 7-phosphate at the C-1 position to selectively form D-glycero-beta-D-manno-heptose-1,7-bisphosphate. In terms of biological role, catalyzes the ADP transfer from ATP to D-glycero-beta-D-manno-heptose 1-phosphate, yielding ADP-D-glycero-beta-D-manno-heptose. The chain is Bifunctional protein HldE from Histophilus somni (strain 129Pt) (Haemophilus somnus).